The primary structure comprises 338 residues: UDP-3-O-acylglucosamine N-acyltransferase (338 aa).

The Proton acceptor role is filled by histidine 239.

It belongs to the transferase hexapeptide repeat family. LpxD subfamily. Homotrimer.

The enzyme catalyses a UDP-3-O-[(3R)-3-hydroxyacyl]-alpha-D-glucosamine + a (3R)-hydroxyacyl-[ACP] = a UDP-2-N,3-O-bis[(3R)-3-hydroxyacyl]-alpha-D-glucosamine + holo-[ACP] + H(+). It participates in bacterial outer membrane biogenesis; LPS lipid A biosynthesis. In terms of biological role, catalyzes the N-acylation of UDP-3-O-acylglucosamine using 3-hydroxyacyl-ACP as the acyl donor. Is involved in the biosynthesis of lipid A, a phosphorylated glycolipid that anchors the lipopolysaccharide to the outer membrane of the cell. The sequence is that of UDP-3-O-acylglucosamine N-acyltransferase from Thermosynechococcus vestitus (strain NIES-2133 / IAM M-273 / BP-1).